Reading from the N-terminus, the 246-residue chain is Proteasome subunit alpha type-6-A (246 aa).

It belongs to the peptidase T1A family. Component of the 20S core complex of the 26S proteasome. The 26S proteasome is composed of a core protease (CP), known as the 20S proteasome, capped at one or both ends by the 19S regulatory particle (RP/PA700). The 20S proteasome core is composed of 28 subunits that are arranged in four stacked rings, resulting in a barrel-shaped structure. The two end rings are each formed by seven alpha subunits, and the two central rings are each formed by seven beta subunits. The catalytic chamber with the active sites is on the inside of the barrel. In terms of tissue distribution, ubiquitous low levels, higher expression in siliques and flowers.

The protein resides in the cytoplasm. It localises to the nucleus. Functionally, the proteasome is a multicatalytic proteinase complex which is characterized by its ability to cleave peptides with Arg, Phe, Tyr, Leu, and Glu adjacent to the leaving group at neutral or slightly basic pH. The proteasome has an ATP-dependent proteolytic activity. This is Proteasome subunit alpha type-6-A (PAA1) from Arabidopsis thaliana (Mouse-ear cress).